We begin with the raw amino-acid sequence, 364 residues long: MGNTFGHLFRITTFGESHGGGVGVVIDGCPPQIEIAAEDIQFELDRRRPGQSRITTPRKETDTCEIVSGMFQGKTLGTPITILVRNKDTRPQDYSEMAQVYRPSHADATYDAKYGIRNWQGGGRSSARETIGRVAAGAIAKKILQQAAGVEVIGYVKRIKTVEADIDPDQVTLAQVEANMVRCPNPETAEEMIDLIDQTRRDANSIGGVVECVARQVPKGLGAPVFDKLEAELAKAVMSLPACKGFEIGSGFAGTQLTGLEHNDEFYTDETGRIRTVTNRSGGIQGGISNGENIVLRAAFKPTATIGKPQKTVNQAGEATTLAAKGRHDPCVLPRAVPMVEAMVALVLCDHLLRHHAQCELLTE.

NADP(+) is bound by residues Arg-47 and Arg-53. FMN-binding positions include 124–126 (RSS), Gly-286, 301–305 (KPTAT), and Arg-327.

This sequence belongs to the chorismate synthase family. In terms of assembly, homotetramer. The cofactor is FMNH2.

The enzyme catalyses 5-O-(1-carboxyvinyl)-3-phosphoshikimate = chorismate + phosphate. It participates in metabolic intermediate biosynthesis; chorismate biosynthesis; chorismate from D-erythrose 4-phosphate and phosphoenolpyruvate: step 7/7. Catalyzes the anti-1,4-elimination of the C-3 phosphate and the C-6 proR hydrogen from 5-enolpyruvylshikimate-3-phosphate (EPSP) to yield chorismate, which is the branch point compound that serves as the starting substrate for the three terminal pathways of aromatic amino acid biosynthesis. This reaction introduces a second double bond into the aromatic ring system. This is Chorismate synthase from Acaryochloris marina (strain MBIC 11017).